The following is a 270-amino-acid chain: Mediator of RNA polymerase II transcription subunit 4 (270 aa).

The tract at residues 1–22 (MAASSSGEKEKERMGGVSGMTG) is disordered. Ala-2 carries the post-translational modification N-acetylalanine. Residues 26-131 (TRERLLSALE…ATAVYQAKEK (106 aa)) adopt a coiled-coil conformation. The residue at position 32 (Ser-32) is a Phosphoserine. The tract at residues 227 to 270 (MSVNMLPPNHSTDFLLEPPGHNKENEDDVEVMSTDSSSSSSDSD) is disordered. Positions 259–270 (STDSSSSSSDSD) are enriched in low complexity.

This sequence belongs to the Mediator complex subunit 4 family. In terms of assembly, component of the Mediator complex, which is composed of MED1, MED4, MED6, MED7, MED8, MED9, MED10, MED11, MED12, MED13, MED13L, MED14, MED15, MED16, MED17, MED18, MED19, MED20, MED21, MED22, MED23, MED24, MED25, MED26, MED27, MED29, MED30, MED31, CCNC, CDK8 and CDC2L6/CDK11. The MED12, MED13, CCNC and CDK8 subunits form a distinct module termed the CDK8 module. Mediator containing the CDK8 module is less active than Mediator lacking this module in supporting transcriptional activation. Individual preparations of the Mediator complex lacking one or more distinct subunits have been variously termed ARC, CRSP, DRIP, PC2, SMCC and TRAP.

It is found in the nucleus. Its function is as follows. Component of the Mediator complex, a coactivator involved in the regulated transcription of nearly all RNA polymerase II-dependent genes. Mediator functions as a bridge to convey information from gene-specific regulatory proteins to the basal RNA polymerase II transcription machinery. Mediator is recruited to promoters by direct interactions with regulatory proteins and serves as a scaffold for the assembly of a functional preinitiation complex with RNA polymerase II and the general transcription factors. The sequence is that of Mediator of RNA polymerase II transcription subunit 4 (Med4) from Rattus norvegicus (Rat).